The chain runs to 60 residues: Cytotoxin 1 (60 aa).

4 cysteine pairs are disulfide-bonded: C3–C21, C14–C38, C42–C53, and C54–C59.

This sequence belongs to the three-finger toxin family. Short-chain subfamily. Type IA cytotoxin sub-subfamily. Monomer in solution; Homodimer and oligomer in the presence of negatively charged lipids forming a pore with a size ranging between 20 and 30 Angstroms. In terms of tissue distribution, expressed by the venom gland.

It is found in the secreted. Its subcellular location is the target cell membrane. Its function is as follows. Shows cytolytic activity on many different cells by forming pore in lipid membranes. In vivo, increases heart rate or kills the animal by cardiac arrest. In addition, it binds to heparin with high affinity, interacts with Kv channel-interacting protein 1 (KCNIP1) in a calcium-independent manner, and binds to integrin alpha-V/beta-3 (ITGAV/ITGB3) with moderate affinity. The chain is Cytotoxin 1 from Naja naja (Indian cobra).